The primary structure comprises 84 residues: Cell division topological specificity factor (84 aa).

It belongs to the MinE family.

Prevents the cell division inhibition by proteins MinC and MinD at internal division sites while permitting inhibition at polar sites. This ensures cell division at the proper site by restricting the formation of a division septum at the midpoint of the long axis of the cell. In Burkholderia ambifaria (strain MC40-6), this protein is Cell division topological specificity factor.